We begin with the raw amino-acid sequence, 294 residues long: 4-diphosphocytidyl-2-C-methyl-D-erythritol kinase (294 aa).

Residue lysine 23 is part of the active site. An ATP-binding site is contributed by 106-116 (PMGGGLGGGSS). Residue aspartate 148 is part of the active site.

It belongs to the GHMP kinase family. IspE subfamily.

It carries out the reaction 4-CDP-2-C-methyl-D-erythritol + ATP = 4-CDP-2-C-methyl-D-erythritol 2-phosphate + ADP + H(+). Its pathway is isoprenoid biosynthesis; isopentenyl diphosphate biosynthesis via DXP pathway; isopentenyl diphosphate from 1-deoxy-D-xylulose 5-phosphate: step 3/6. Functionally, catalyzes the phosphorylation of the position 2 hydroxy group of 4-diphosphocytidyl-2C-methyl-D-erythritol. The polypeptide is 4-diphosphocytidyl-2-C-methyl-D-erythritol kinase (Nitrosospira multiformis (strain ATCC 25196 / NCIMB 11849 / C 71)).